Consider the following 492-residue polypeptide: NADH-quinone oxidoreductase subunit N 2 (492 aa).

14 helical membrane passes run 16–36 (ILPEIVLAVFGIVVMMADALI), 44–64 (PLGYLSLIGVLVSLGAIACQA), 87–107 (FSLFFHVLIALITAAVLLVSF), 118–138 (GEYYAIILFSALGMMLMTSAT), 140–160 (LVLIFIALEISSIGSYVLAAM), 175–195 (FLLGSFATAFFLYGVALIFGA), 216–236 (PIIYLAVALMFIGLGFKVAAA), 250–270 (PSPIVALMSTGPKAAAFAVLL), 282–302 (FWIVWVSAALSMTIGNIGALV), 309–329 (LLAYSSIAHAGYMLVAFAAAK), 333–353 (ISAAIFYTATYAAMNVGAFAV), 381–401 (AAILTVFLLSLIGIPVTGGFF), 416–438 (VWLTIIGVINSAVGAYYYLRIIV), and 455–475 (PFGLALALAMCLMFTIYLGVL).

It belongs to the complex I subunit 2 family. As to quaternary structure, NDH-1 is composed of 14 different subunits. Subunits NuoA, H, J, K, L, M, N constitute the membrane sector of the complex.

It is found in the cell inner membrane. It catalyses the reaction a quinone + NADH + 5 H(+)(in) = a quinol + NAD(+) + 4 H(+)(out). NDH-1 shuttles electrons from NADH, via FMN and iron-sulfur (Fe-S) centers, to quinones in the respiratory chain. The immediate electron acceptor for the enzyme in this species is believed to be ubiquinone. Couples the redox reaction to proton translocation (for every two electrons transferred, four hydrogen ions are translocated across the cytoplasmic membrane), and thus conserves the redox energy in a proton gradient. The protein is NADH-quinone oxidoreductase subunit N 2 of Koribacter versatilis (strain Ellin345).